A 429-amino-acid polypeptide reads, in one-letter code: Saccharopine dehydrogenase-like oxidoreductase (429 aa).

A2 carries the post-translational modification N-acetylalanine. Residue S217 is modified to Phosphoserine.

The protein belongs to the saccharopine dehydrogenase family.

In Homo sapiens (Human), this protein is Saccharopine dehydrogenase-like oxidoreductase (SCCPDH).